Here is a 303-residue protein sequence, read N- to C-terminus: UDP-3-O-acyl-N-acetylglucosamine deacetylase (303 aa).

Residues histidine 79, histidine 238, and aspartate 242 each contribute to the Zn(2+) site. Residue histidine 265 is the Proton donor of the active site.

This sequence belongs to the LpxC family. It depends on Zn(2+) as a cofactor.

It carries out the reaction a UDP-3-O-[(3R)-3-hydroxyacyl]-N-acetyl-alpha-D-glucosamine + H2O = a UDP-3-O-[(3R)-3-hydroxyacyl]-alpha-D-glucosamine + acetate. It participates in glycolipid biosynthesis; lipid IV(A) biosynthesis; lipid IV(A) from (3R)-3-hydroxytetradecanoyl-[acyl-carrier-protein] and UDP-N-acetyl-alpha-D-glucosamine: step 2/6. In terms of biological role, catalyzes the hydrolysis of UDP-3-O-myristoyl-N-acetylglucosamine to form UDP-3-O-myristoylglucosamine and acetate, the committed step in lipid A biosynthesis. This chain is UDP-3-O-acyl-N-acetylglucosamine deacetylase, found in Pseudoalteromonas translucida (strain TAC 125).